Here is a 336-residue protein sequence, read N- to C-terminus: UDP-glucose 4-epimerase (336 aa).

NAD(+) contacts are provided by residues 11–12 (YI), 31–36 (DNLINS), 58–59 (DI), 80–84 (FAGLK), Asn-99, Ser-124, Tyr-149, Lys-153, and Phe-178. Ser-124 and Tyr-149 together coordinate substrate. Tyr-149 acts as the Proton acceptor in catalysis. Substrate contacts are provided by residues Asn-179, 199–200 (NL), 216–218 (LVY), Arg-231, and 290–293 (RPGD).

It belongs to the NAD(P)-dependent epimerase/dehydratase family. In terms of assembly, homodimer. Requires NAD(+) as cofactor.

It catalyses the reaction UDP-alpha-D-glucose = UDP-alpha-D-galactose. Its pathway is carbohydrate metabolism; galactose metabolism. In terms of biological role, involved in the metabolism of galactose. Catalyzes the conversion of UDP-galactose (UDP-Gal) to UDP-glucose (UDP-Glc) through a mechanism involving the transient reduction of NAD. This chain is UDP-glucose 4-epimerase (galE), found in Yersinia enterocolitica.